The following is an 80-amino-acid chain: UPF0154 protein SaurJH1_1431 (80 aa).

The chain crosses the membrane as a helical span at residues 4–24 (WLAIIFIVAALILGLIGGFLL).

This sequence belongs to the UPF0154 family.

It localises to the cell membrane. The sequence is that of UPF0154 protein SaurJH1_1431 from Staphylococcus aureus (strain JH1).